We begin with the raw amino-acid sequence, 105 residues long: Large ribosomal subunit protein eL33 (105 aa).

The protein belongs to the eukaryotic ribosomal protein eL33 family.

In terms of biological role, the protein was found to bind to both initiator and elongator tRNAs and consequently was assigned to the P site or P and A site. In Dictyostelium discoideum (Social amoeba), this protein is Large ribosomal subunit protein eL33 (rpl35a).